The sequence spans 402 residues: Dual-specificity RNA methyltransferase RlmN (402 aa).

Glu-124 (proton acceptor) is an active-site residue. In terms of domain architecture, Radical SAM core spans 130-370; sequence DADRGTLCVS…APVRTPRGRD (241 aa). A disulfide bond links Cys-137 and Cys-375. [4Fe-4S] cluster-binding residues include Cys-144, Cys-148, and Cys-151. S-adenosyl-L-methionine-binding positions include 199–200, Ser-231, 253–255, and Asn-332; these read GE and SLH. The active-site S-methylcysteine intermediate is the Cys-375.

Belongs to the radical SAM superfamily. RlmN family. [4Fe-4S] cluster serves as cofactor.

Its subcellular location is the cytoplasm. It catalyses the reaction adenosine(2503) in 23S rRNA + 2 reduced [2Fe-2S]-[ferredoxin] + 2 S-adenosyl-L-methionine = 2-methyladenosine(2503) in 23S rRNA + 5'-deoxyadenosine + L-methionine + 2 oxidized [2Fe-2S]-[ferredoxin] + S-adenosyl-L-homocysteine. The catalysed reaction is adenosine(37) in tRNA + 2 reduced [2Fe-2S]-[ferredoxin] + 2 S-adenosyl-L-methionine = 2-methyladenosine(37) in tRNA + 5'-deoxyadenosine + L-methionine + 2 oxidized [2Fe-2S]-[ferredoxin] + S-adenosyl-L-homocysteine. Its function is as follows. Specifically methylates position 2 of adenine 2503 in 23S rRNA and position 2 of adenine 37 in tRNAs. m2A2503 modification seems to play a crucial role in the proofreading step occurring at the peptidyl transferase center and thus would serve to optimize ribosomal fidelity. In Rhizorhabdus wittichii (strain DSM 6014 / CCUG 31198 / JCM 15750 / NBRC 105917 / EY 4224 / RW1) (Sphingomonas wittichii), this protein is Dual-specificity RNA methyltransferase RlmN.